Reading from the N-terminus, the 647-residue chain is Threonine--tRNA ligase (647 aa).

The region spanning 1 to 61 (MIKITFPDGA…EEDGSIEIVT (61 aa)) is the TGS domain. The tract at residues 240 to 538 (DHRKLGKELD…LIETYKGAFP (299 aa)) is catalytic. 3 residues coordinate Zn(2+): cysteine 334, histidine 385, and histidine 515.

It belongs to the class-II aminoacyl-tRNA synthetase family. Homodimer. Requires Zn(2+) as cofactor.

Its subcellular location is the cytoplasm. The enzyme catalyses tRNA(Thr) + L-threonine + ATP = L-threonyl-tRNA(Thr) + AMP + diphosphate + H(+). In terms of biological role, catalyzes the attachment of threonine to tRNA(Thr) in a two-step reaction: L-threonine is first activated by ATP to form Thr-AMP and then transferred to the acceptor end of tRNA(Thr). Also edits incorrectly charged L-seryl-tRNA(Thr). The chain is Threonine--tRNA ligase from Streptococcus pyogenes serotype M3 (strain ATCC BAA-595 / MGAS315).